The sequence spans 547 residues: Chaperonin GroEL (547 aa).

Residues 30-33 (TLGP), Lys-51, 87-91 (DGTTT), Gly-415, and Asp-495 each bind ATP. Residues 526 to 547 (QDATPTASPDMGGMGGMGGGMM) are disordered. A compositionally biased stretch (gly residues) spans 537–547 (GGMGGMGGGMM).

The protein belongs to the chaperonin (HSP60) family. In terms of assembly, forms a cylinder of 14 subunits composed of two heptameric rings stacked back-to-back. Interacts with the co-chaperonin GroES.

It is found in the cytoplasm. It carries out the reaction ATP + H2O + a folded polypeptide = ADP + phosphate + an unfolded polypeptide.. Together with its co-chaperonin GroES, plays an essential role in assisting protein folding. The GroEL-GroES system forms a nano-cage that allows encapsulation of the non-native substrate proteins and provides a physical environment optimized to promote and accelerate protein folding. The chain is Chaperonin GroEL from Vesicomyosocius okutanii subsp. Calyptogena okutanii (strain HA).